The following is a 248-amino-acid chain: Phosphoglycerate mutase (248 aa).

Substrate is bound by residues 8-15 (RHGQSEWN), 21-22 (TG), Arg-60, 87-90 (ERHY), Lys-98, 114-115 (RR), and 183-184 (GN). Catalysis depends on His-9, which acts as the Tele-phosphohistidine intermediate. Catalysis depends on Glu-87, which acts as the Proton donor/acceptor.

Belongs to the phosphoglycerate mutase family. BPG-dependent PGAM subfamily.

The protein resides in the cytoplasm. It carries out the reaction (2R)-2-phosphoglycerate = (2R)-3-phosphoglycerate. It participates in carbohydrate degradation; glycolysis; pyruvate from D-glyceraldehyde 3-phosphate: step 3/5. This Candida albicans (strain SC5314 / ATCC MYA-2876) (Yeast) protein is Phosphoglycerate mutase (GPM1).